A 329-amino-acid polypeptide reads, in one-letter code: DNA-directed RNA polymerase subunit alpha (329 aa).

An alpha N-terminal domain (alpha-NTD) region spans residues 1 to 231 (MSILSFQMPE…KHFMLFSDQT (231 aa)). Residues 247–329 (EEFLHMRKLL…DTAKYKLDED (83 aa)) are alpha C-terminal domain (alpha-CTD).

Belongs to the RNA polymerase alpha chain family. Homodimer. The RNAP catalytic core consists of 2 alpha, 1 beta, 1 beta' and 1 omega subunit. When a sigma factor is associated with the core the holoenzyme is formed, which can initiate transcription.

It catalyses the reaction RNA(n) + a ribonucleoside 5'-triphosphate = RNA(n+1) + diphosphate. Its function is as follows. DNA-dependent RNA polymerase catalyzes the transcription of DNA into RNA using the four ribonucleoside triphosphates as substrates. The polypeptide is DNA-directed RNA polymerase subunit alpha (Cytophaga hutchinsonii (strain ATCC 33406 / DSM 1761 / CIP 103989 / NBRC 15051 / NCIMB 9469 / D465)).